The chain runs to 396 residues: Elongation factor Tu (396 aa).

The region spanning 10 to 205 (KPHVNIGTIG…ACDDNIPDPV (196 aa)) is the tr-type G domain. Residues 19 to 26 (GHVDHGKT) form a G1 region. Position 19–26 (19–26 (GHVDHGKT)) interacts with GTP. T26 provides a ligand contact to Mg(2+). Residues 62–66 (GITIN) are G2. The interval 83 to 86 (DAPG) is G3. GTP contacts are provided by residues 83–87 (DAPGH) and 138–141 (NKCD). The G4 stretch occupies residues 138 to 141 (NKCD). The tract at residues 175 to 177 (SAL) is G5.

The protein belongs to the TRAFAC class translation factor GTPase superfamily. Classic translation factor GTPase family. EF-Tu/EF-1A subfamily. As to quaternary structure, monomer.

The protein resides in the cytoplasm. It carries out the reaction GTP + H2O = GDP + phosphate + H(+). Functionally, GTP hydrolase that promotes the GTP-dependent binding of aminoacyl-tRNA to the A-site of ribosomes during protein biosynthesis. The protein is Elongation factor Tu of Corynebacterium glutamicum (strain ATCC 13032 / DSM 20300 / JCM 1318 / BCRC 11384 / CCUG 27702 / LMG 3730 / NBRC 12168 / NCIMB 10025 / NRRL B-2784 / 534).